Here is a 150-residue protein sequence, read N- to C-terminus: 15 kDa calcium-binding protein (150 aa).

At alanine 1 the chain carries N-acetylalanine. EF-hand domains lie at 7 to 42 (TDAE…AGKS), 43 to 78 (FSEE…KMMK), 81 to 116 (WKKS…RIEP), and 118 to 150 (MSKE…IKSS). The Ca(2+) site is built by aspartate 22, aspartate 24, serine 26, threonine 28, aspartate 56, aspartate 58, serine 60, threonine 62, glutamate 67, aspartate 94, aspartate 96, asparagine 98, glutamate 105, aspartate 131, aspartate 133, aspartate 135, lysine 137, and glutamate 142.

Its subcellular location is the nucleus. It localises to the cytoplasm. It is found in the cytoskeleton. The protein localises to the spindle. May play an important role in mitosis of sea urchin egg. May function as a Ca(2+)-dependent intracellular modulator of microtubule assembly. In Hemicentrotus pulcherrimus (Sea urchin), this protein is 15 kDa calcium-binding protein.